The primary structure comprises 448 residues: tRNA-2-methylthio-N(6)-dimethylallyladenosine synthase (448 aa).

An MTTase N-terminal domain is found at Lys2–Glu119. Positions 11, 48, 82, 156, 160, and 163 each coordinate [4Fe-4S] cluster. Residues Arg142–Ser377 enclose the Radical SAM core domain. The TRAM domain occupies Gln378–Glu444.

Belongs to the methylthiotransferase family. MiaB subfamily. Monomer. [4Fe-4S] cluster is required as a cofactor.

The protein resides in the cytoplasm. The catalysed reaction is N(6)-dimethylallyladenosine(37) in tRNA + (sulfur carrier)-SH + AH2 + 2 S-adenosyl-L-methionine = 2-methylsulfanyl-N(6)-dimethylallyladenosine(37) in tRNA + (sulfur carrier)-H + 5'-deoxyadenosine + L-methionine + A + S-adenosyl-L-homocysteine + 2 H(+). Catalyzes the methylthiolation of N6-(dimethylallyl)adenosine (i(6)A), leading to the formation of 2-methylthio-N6-(dimethylallyl)adenosine (ms(2)i(6)A) at position 37 in tRNAs that read codons beginning with uridine. In Polynucleobacter necessarius subsp. necessarius (strain STIR1), this protein is tRNA-2-methylthio-N(6)-dimethylallyladenosine synthase.